A 371-amino-acid polypeptide reads, in one-letter code: Glyco-Gag protein (371 aa).

At 1-51 (MSGASSGTAIGAHLFGVSPEYRVLIGDEGAGPSKSLSEVSFSVWYRSRAAR) the chain is on the cytoplasmic side. Residues 52–72 (LVILCLVASFLVPCLTFLIAE) form a helical membrane-spanning segment. Topologically, residues 73–371 (AVMGQTVTTP…NVIDETFPLT (299 aa)) are extracellular. N-linked (GlcNAc...) asparagine; by host glycosylation occurs at Asn-134. 2 disordered regions span residues 171–281 (VRPF…NNRP) and 350–371 (VPGE…FPLT). The segment covering 174-193 (FLPPPKPPTPLPQPLSPQPS) has biased composition (pro residues). Residues 194 to 203 (APLTSSLYPV) are compositionally biased toward low complexity. Pro residues-rich tracts occupy residues 204 to 220 (VPKP…PDPS) and 230 to 245 (EPPP…PSGP).

Post-translationally, glycosylated by host. In terms of processing, cleaved by host near the middle of the molecule, releasing the c-terminal half containing capsid and nucleoprotein domains op GAG.

It localises to the host cell membrane. Plays a role in viral particle release. Presumably acts by facilitating the fission of the virion bud at the cell surface. The chain is Glyco-Gag protein from Feline sarcoma virus (strain Snyder-Theilen).